A 408-amino-acid polypeptide reads, in one-letter code: MSDIKKVVLAYSGGLDTSVILKWLQDEYQCEVVTFTADIGQGEEVEPARQKAVSLGIKPENIFIEDLREEFVRDFVYPMFRANTIYEGEYLLGTSIARPLIAKRQIEIANQVGADAVSHGATGKGNDQVRFELGYYALKPDVKVIAPWREWDLLSREKLLAYAETHGIDISKKKNGGSPYSMDANLLHISYEGTVLEDPAQEPEEDMWLWSVSPENAPDQAEYVELEYRKGDIVAVNGQALSPAGVLTELNRLGNKHGIGRLDIVENRYVGMKSRGCYETPGGTIMLKAHRAIESITLDREVAHLKDELMPKYAQLIYTGYWWSPERAMLQQMIDASQATVNGWVRLKLYKGNVIVVGRESKTDSLFDPTIATFDEDGGAYNHADAAGFIRLNALRMRIAANARNKRG.

ATP contacts are provided by residues 10-18 (AYSGGLDTS) and Ala37. Positions 90 and 95 each coordinate L-citrulline. Gly120 is a binding site for ATP. Positions 122, 126, and 127 each coordinate L-aspartate. An L-citrulline-binding site is contributed by Asn126. Residues Arg130, Ser181, Ser190, Glu266, and Tyr278 each contribute to the L-citrulline site.

This sequence belongs to the argininosuccinate synthase family. Type 1 subfamily. In terms of assembly, homotetramer.

It is found in the cytoplasm. It carries out the reaction L-citrulline + L-aspartate + ATP = 2-(N(omega)-L-arginino)succinate + AMP + diphosphate + H(+). It participates in amino-acid biosynthesis; L-arginine biosynthesis; L-arginine from L-ornithine and carbamoyl phosphate: step 2/3. This is Argininosuccinate synthase from Chromobacterium violaceum (strain ATCC 12472 / DSM 30191 / JCM 1249 / CCUG 213 / NBRC 12614 / NCIMB 9131 / NCTC 9757 / MK).